The following is a 227-amino-acid chain: ATP synthase F(0) complex subunit a (227 aa).

6 helical membrane passes run 14–34 (LFGI…FPAP), 69–89 (WGPY…LGLL), 98–118 (QLSV…IIGL), 132–152 (EGTP…SLFI), 180–200 (FVLL…LFLL), and 202–222 (LLEV…LSLY).

It belongs to the ATPase A chain family. In terms of assembly, component of the ATP synthase complex composed at least of ATP5F1A/subunit alpha, ATP5F1B/subunit beta, ATP5MC1/subunit c (homooctomer), MT-ATP6/subunit a, MT-ATP8/subunit 8, ATP5ME/subunit e, ATP5MF/subunit f, ATP5MG/subunit g, ATP5MK/subunit k, ATP5MJ/subunit j, ATP5F1C/subunit gamma, ATP5F1D/subunit delta, ATP5F1E/subunit epsilon, ATP5PF/subunit F6, ATP5PB/subunit b, ATP5PD/subunit d, ATP5PO/subunit OSCP. ATP synthase complex consists of a soluble F(1) head domain (subunits alpha(3) and beta(3)) - the catalytic core - and a membrane F(0) domain - the membrane proton channel (subunits c, a, 8, e, f, g, k and j). These two domains are linked by a central stalk (subunits gamma, delta, and epsilon) rotating inside the F1 region and a stationary peripheral stalk (subunits F6, b, d, and OSCP). Interacts with DNAJC30; interaction is direct.

The protein resides in the mitochondrion inner membrane. It carries out the reaction H(+)(in) = H(+)(out). Subunit a, of the mitochondrial membrane ATP synthase complex (F(1)F(0) ATP synthase or Complex V) that produces ATP from ADP in the presence of a proton gradient across the membrane which is generated by electron transport complexes of the respiratory chain. ATP synthase complex consist of a soluble F(1) head domain - the catalytic core - and a membrane F(1) domain - the membrane proton channel. These two domains are linked by a central stalk rotating inside the F(1) region and a stationary peripheral stalk. During catalysis, ATP synthesis in the catalytic domain of F(1) is coupled via a rotary mechanism of the central stalk subunits to proton translocation. With the subunit c (ATP5MC1), forms the proton-conducting channel in the F(0) domain, that contains two crucial half-channels (inlet and outlet) that facilitate proton movement from the mitochondrial intermembrane space (IMS) into the matrix. Protons are taken up via the inlet half-channel and released through the outlet half-channel, following a Grotthuss mechanism. The polypeptide is ATP synthase F(0) complex subunit a (Tetraodon nigroviridis (Spotted green pufferfish)).